Consider the following 179-residue polypeptide: Large ribosomal subunit protein uL5 (179 aa).

This sequence belongs to the universal ribosomal protein uL5 family. In terms of assembly, part of the 50S ribosomal subunit; part of the 5S rRNA/L5/L18/L25 subcomplex. Contacts the 5S rRNA and the P site tRNA. Forms a bridge to the 30S subunit in the 70S ribosome.

Its function is as follows. This is one of the proteins that bind and probably mediate the attachment of the 5S RNA into the large ribosomal subunit, where it forms part of the central protuberance. In the 70S ribosome it contacts protein S13 of the 30S subunit (bridge B1b), connecting the 2 subunits; this bridge is implicated in subunit movement. Contacts the P site tRNA; the 5S rRNA and some of its associated proteins might help stabilize positioning of ribosome-bound tRNAs. The chain is Large ribosomal subunit protein uL5 from Alcanivorax borkumensis (strain ATCC 700651 / DSM 11573 / NCIMB 13689 / SK2).